The sequence spans 379 residues: Alcohol dehydrogenase 1 (379 aa).

The Zn(2+) site is built by Cys-47, Thr-49, His-69, Cys-99, Cys-102, Cys-105, Cys-113, and Cys-177. Residues Thr-49 and His-69 each coordinate an alcohol. Thr-49 is an NAD(+) binding site. NAD(+) contacts are provided by residues 202-207 (GLGAVG), Asp-226, Arg-231, Thr-272, Val-295, 295-297 (VGV), Phe-322, and Arg-372.

This sequence belongs to the zinc-containing alcohol dehydrogenase family. In terms of assembly, homodimer. Zn(2+) is required as a cofactor.

The protein resides in the cytoplasm. It carries out the reaction a primary alcohol + NAD(+) = an aldehyde + NADH + H(+). It catalyses the reaction a secondary alcohol + NAD(+) = a ketone + NADH + H(+). This chain is Alcohol dehydrogenase 1 (ADH1), found in Oryza sativa subsp. indica (Rice).